A 109-amino-acid chain; its full sequence is Putative polyketide cyclase (109 aa).

To polyketide cyclases.

Involved in developmentally regulated synthesis of a compound biosynthetically related to polyketide antibiotics which is essential for spore color in Streptomyces halstedii. The polypeptide is Putative polyketide cyclase (sch4) (Streptomyces halstedii).